A 49-amino-acid polypeptide reads, in one-letter code: Large ribosomal subunit protein bL32 (49 aa).

The interval 25–49 (AKPVKDKDGTYKLPHHINPTTGEYK) is disordered.

This sequence belongs to the bacterial ribosomal protein bL32 family.

The protein is Large ribosomal subunit protein bL32 of Sulfurimonas denitrificans (strain ATCC 33889 / DSM 1251) (Thiomicrospira denitrificans (strain ATCC 33889 / DSM 1251)).